Reading from the N-terminus, the 180-residue chain is Large ribosomal subunit protein uL6 (180 aa).

The protein belongs to the universal ribosomal protein uL6 family. As to quaternary structure, part of the 50S ribosomal subunit.

Functionally, this protein binds to the 23S rRNA, and is important in its secondary structure. It is located near the subunit interface in the base of the L7/L12 stalk, and near the tRNA binding site of the peptidyltransferase center. The polypeptide is Large ribosomal subunit protein uL6 (Bdellovibrio bacteriovorus (strain ATCC 15356 / DSM 50701 / NCIMB 9529 / HD100)).